The following is a 233-amino-acid chain: 5'-methylthioadenosine/S-adenosylhomocysteine nucleosidase (233 aa).

Glu-12 acts as the Proton acceptor in catalysis. Substrate contacts are provided by residues Gly-78, Ile-152, and 173–174 (ME). The Proton donor role is filled by Asp-197.

It belongs to the PNP/UDP phosphorylase family. MtnN subfamily. In terms of assembly, homodimer.

It carries out the reaction S-adenosyl-L-homocysteine + H2O = S-(5-deoxy-D-ribos-5-yl)-L-homocysteine + adenine. The catalysed reaction is S-methyl-5'-thioadenosine + H2O = 5-(methylsulfanyl)-D-ribose + adenine. The enzyme catalyses 5'-deoxyadenosine + H2O = 5-deoxy-D-ribose + adenine. Its pathway is amino-acid biosynthesis; L-methionine biosynthesis via salvage pathway; S-methyl-5-thio-alpha-D-ribose 1-phosphate from S-methyl-5'-thioadenosine (hydrolase route): step 1/2. Its function is as follows. Catalyzes the irreversible cleavage of the glycosidic bond in both 5'-methylthioadenosine (MTA) and S-adenosylhomocysteine (SAH/AdoHcy) to adenine and the corresponding thioribose, 5'-methylthioribose and S-ribosylhomocysteine, respectively. Also cleaves 5'-deoxyadenosine, a toxic by-product of radical S-adenosylmethionine (SAM) enzymes, into 5-deoxyribose and adenine. Thus, is required for in vivo function of the radical SAM enzymes biotin synthase and lipoic acid synthase, that are inhibited by 5'-deoxyadenosine accumulation. This is 5'-methylthioadenosine/S-adenosylhomocysteine nucleosidase from Sodalis glossinidius (strain morsitans).